The sequence spans 385 residues: 1-deoxy-D-xylulose 5-phosphate reductoisomerase (385 aa).

NADPH is bound by residues T10, G11, S12, I13, and N124. A 1-deoxy-D-xylulose 5-phosphate-binding site is contributed by K125. E126 serves as a coordination point for NADPH. D150 serves as a coordination point for Mn(2+). S151, E152, S176, and H199 together coordinate 1-deoxy-D-xylulose 5-phosphate. Position 152 (E152) interacts with Mn(2+). Position 205 (G205) interacts with NADPH. 1-deoxy-D-xylulose 5-phosphate contacts are provided by S212, N217, K218, and E221. E221 contacts Mn(2+).

It belongs to the DXR family. Mg(2+) is required as a cofactor. The cofactor is Mn(2+).

The enzyme catalyses 2-C-methyl-D-erythritol 4-phosphate + NADP(+) = 1-deoxy-D-xylulose 5-phosphate + NADPH + H(+). It functions in the pathway isoprenoid biosynthesis; isopentenyl diphosphate biosynthesis via DXP pathway; isopentenyl diphosphate from 1-deoxy-D-xylulose 5-phosphate: step 1/6. Its function is as follows. Catalyzes the NADPH-dependent rearrangement and reduction of 1-deoxy-D-xylulose-5-phosphate (DXP) to 2-C-methyl-D-erythritol 4-phosphate (MEP). The chain is 1-deoxy-D-xylulose 5-phosphate reductoisomerase from Clostridium botulinum (strain Alaska E43 / Type E3).